Here is a 433-residue protein sequence, read N- to C-terminus: MAQFYSAKRRTTTRQIITVSVNDLDSFGQGVARHNGKTLFIPGLLPQENAEVTVTEDKKQYARAKVVRRLSDSPERETPRCPHFGVCGGCQQQHASVDLQQRSKSAALARLMKHDVSEVIADVPWGYRRRARLSLNYLPKTQQLQMGFRKAGSSDIVDVKQCPILAPQLEALLPKVRACLGSLQAMRHLGHVELVQATSGTLMILRHTAPLSSADREKLERFSHSEGLDLYLAPDSEILETVSGEMPWYDSNGLRLTFSPRDFIQVNAGVNQKMVARALEWLDVQPEDRVLDLFCGMGNFTLPLATQAASVVGVEGVPALVEKGQQNARLNGLQNVTFYHENLEEDVTKQPWAKNGFDKVLLDPARAGAAGVMQQIIKLEPIRIVYVSCNPATLARDSEALLKAGYTIARLAMLDMFPHTGHLESMVLFSRVK.

Residues 10 to 68 (RTTTRQIITVSVNDLDSFGQGVARHNGKTLFIPGLLPQENAEVTVTEDKKQYARAKVVR) form the TRAM domain. Interaction with RNA regions lie at residues 23–40 (DLDS…KTLF) and 58–63 (KKQYAR). The [4Fe-4S] cluster site is built by Cys81, Cys87, Cys90, and Cys162. Residues Gln265, Phe294, Asn299, Glu315, Asn342, and Asp363 each coordinate S-adenosyl-L-methionine. The Nucleophile role is filled by Cys389.

Belongs to the class I-like SAM-binding methyltransferase superfamily. RNA M5U methyltransferase family. RlmD subfamily.

It carries out the reaction uridine(1939) in 23S rRNA + S-adenosyl-L-methionine = 5-methyluridine(1939) in 23S rRNA + S-adenosyl-L-homocysteine + H(+). In terms of biological role, catalyzes the formation of 5-methyl-uridine at position 1939 (m5U1939) in 23S rRNA. The polypeptide is 23S rRNA (uracil(1939)-C(5))-methyltransferase RlmD (Escherichia coli (strain K12)).